A 635-amino-acid polypeptide reads, in one-letter code: DNA topoisomerase 4 subunit B (635 aa).

Residues Tyr5, Asn45, Asp72, 113–119, and Lys340 contribute to the ATP site; that span reads GLHGVGA. The Toprim domain occupies 422 to 537; sequence RELFVVEGDS…KGHIYLALPP (116 aa). Residues Glu428, Asp502, and Asp504 each contribute to the Mg(2+) site.

This sequence belongs to the type II topoisomerase family. ParE type 2 subfamily. In terms of assembly, heterotetramer composed of ParC and ParE. It depends on Mg(2+) as a cofactor. The cofactor is Mn(2+). Ca(2+) serves as cofactor.

The enzyme catalyses ATP-dependent breakage, passage and rejoining of double-stranded DNA.. Topoisomerase IV is essential for chromosome segregation. It relaxes supercoiled DNA. Performs the decatenation events required during the replication of a circular DNA molecule. In Mycoplasma pneumoniae (strain ATCC 29342 / M129 / Subtype 1) (Mycoplasmoides pneumoniae), this protein is DNA topoisomerase 4 subunit B.